Consider the following 428-residue polypeptide: Serine--tRNA ligase (428 aa).

Position 231–233 (231–233 (TAE)) interacts with L-serine. 262–264 (RSE) provides a ligand contact to ATP. Residue Glu-285 participates in L-serine binding. 349–352 (EISS) contacts ATP. Ser-385 serves as a coordination point for L-serine.

The protein belongs to the class-II aminoacyl-tRNA synthetase family. Type-1 seryl-tRNA synthetase subfamily. As to quaternary structure, homodimer. The tRNA molecule binds across the dimer.

It localises to the cytoplasm. It carries out the reaction tRNA(Ser) + L-serine + ATP = L-seryl-tRNA(Ser) + AMP + diphosphate + H(+). The enzyme catalyses tRNA(Sec) + L-serine + ATP = L-seryl-tRNA(Sec) + AMP + diphosphate + H(+). Its pathway is aminoacyl-tRNA biosynthesis; selenocysteinyl-tRNA(Sec) biosynthesis; L-seryl-tRNA(Sec) from L-serine and tRNA(Sec): step 1/1. Functionally, catalyzes the attachment of serine to tRNA(Ser). Is also able to aminoacylate tRNA(Sec) with serine, to form the misacylated tRNA L-seryl-tRNA(Sec), which will be further converted into selenocysteinyl-tRNA(Sec). This Staphylococcus aureus (strain MRSA252) protein is Serine--tRNA ligase.